Here is a 625-residue protein sequence, read N- to C-terminus: Alpha-protein kinase vwkA (625 aa).

Residues 1-15 (MESKYVLSTEKESKT) show a composition bias toward basic and acidic residues. Positions 1 to 64 (MESKYVLSTE…GLSSGGSKTH (64 aa)) are disordered. Polar residues-rich tracts occupy residues 25 to 39 (DMDS…TSLG) and 46 to 63 (SLKT…GSKT). Positions 87-114 (TKDSITLAKEKEKKIEKRNEEIKLTFKA) form a coiled coil. The 201-residue stretch at 122–322 (DLLFIVDCTG…KMNERIFISI (201 aa)) folds into the VWFA domain. Residues 386–600 (TCLSSSYEMK…HCKKLGLTIP (215 aa)) form the Alpha-type protein kinase domain. ATP is bound at residue 570 to 576 (GSCNLGK). Positions 602–625 (FTSSSSTSSSSRSTSSSSSISYSY) are disordered.

It belongs to the protein kinase superfamily. Alpha-type protein kinase family. ALPK subfamily. Interacts with calmodulin; in the presence of calcium. Post-translationally, autophosphorylated, in vitro.

It is found in the cytoplasm. The protein localises to the cytosol. Its subcellular location is the perinuclear region. The protein resides in the contractile vacuole membrane. It catalyses the reaction L-seryl-[protein] + ATP = O-phospho-L-seryl-[protein] + ADP + H(+). It carries out the reaction L-threonyl-[protein] + ATP = O-phospho-L-threonyl-[protein] + ADP + H(+). Autophosphorylation activity enhanced by calcium/calmodulin. Displays a modest preference for threonine over serine residues. Does not phosphorylate myosin II, however can phosphorylate MBP, in vitro. May be involved in the regulation of myosin II function during cytokinesis. Overexpression leads to impaired cell proliferation in suspension culture and fails to develop beyond the mound stage. Both overexpression and absence of the gene can result in defects in cytokinesis and alterations in myosin II abundance and assembly. The sequence is that of Alpha-protein kinase vwkA (vwkA) from Dictyostelium discoideum (Social amoeba).